A 349-amino-acid polypeptide reads, in one-letter code: UPF0283 membrane protein Ent638_2153 (349 aa).

Transmembrane regions (helical) follow at residues 70–90 (MVTA…VQWT), 99–119 (WVAL…VGSV), and 213–233 (ESTL…FIAW).

The protein belongs to the UPF0283 family.

It is found in the cell inner membrane. This chain is UPF0283 membrane protein Ent638_2153, found in Enterobacter sp. (strain 638).